The sequence spans 145 residues: MSRRSSFPVHLHGRSMLLVFVGGALGTAARALLSAAAPTVAVISVITFVINVIGAFVLGWLLESLALRGPDEGRRRDVRLFAGTGVLGGFTTYSAFAVDTDGLIVASNVGGGILYAAATIAIGAAAYLAGIALGAAIGCRRGVSA.

4 helical membrane passes run 16-36 (MLLVFVGGALGTAARALLSAA), 42-62 (VISVITFVINVIGAFVLGWLL), 80-100 (LFAGTGVLGGFTTYSAFAVDT), and 113-133 (ILYAAATIAIGAAAYLAGIAL). G88 and T91 together coordinate Na(+).

It belongs to the fluoride channel Fluc/FEX (TC 1.A.43) family.

It localises to the cell membrane. The enzyme catalyses fluoride(in) = fluoride(out). Na(+) is not transported, but it plays an essential structural role and its presence is essential for fluoride channel function. Functionally, fluoride-specific ion channel. Important for reducing fluoride concentration in the cell, thus reducing its toxicity. The polypeptide is Fluoride-specific ion channel FluC 2 (Leifsonia xyli subsp. xyli (strain CTCB07)).